A 153-amino-acid chain; its full sequence is ORM1-like protein 3 (153 aa).

Residues 1–17 (MNVGTAHSEVNPNTRVM) are important for ceramide level-sensing. The Cytoplasmic portion of the chain corresponds to 1 to 21 (MNVGTAHSEVNPNTRVMNSRG). The next 2 helical transmembrane spans lie at 22–42 (IWLSYVLAIGLLHVVLLSIPF) and 43–63 (VSVPVVWTLTNLIHNMGMYIF). Topologically, residues 64–94 (LHTVKGTPFETPDQGKARLLTHWEQMDYGVQ) are cytoplasmic. The chain crosses the membrane as a helical span at residues 95-117 (FTASRKFLTITPIVLYFLTSFYT). Residues 118–121 (KYDQ) are Extracellular-facing. The chain crosses the membrane as a helical span at residues 122 to 142 (IHFILNTVSLMSVLIPKLPQL). Position 137 is a hydroxyproline (Pro-137). Over 143–153 (HGVRIFGINKY) the chain is Cytoplasmic.

The protein belongs to the ORM family. In terms of assembly, ceramide-sensitive subunit of the serine palmitoyltransferase (SPT) complex, which is also composed of SPTLC1, SPTLC2/3 and SPTSSA/B. When hydroxylated at Pro-137, ubiquitinated via 'Lys-48'-linkage, leading to proteasomal degradation. In endothelial cells, ORMDL3 proteasomal degradation is controlled by the sphingosine 1-phosphate receptor signaling pathway.

Its subcellular location is the endoplasmic reticulum membrane. Functionally, plays an essential role in the homeostatic regulation of sphingolipid de novo biosynthesis by modulating the activity of the serine palmitoyltransferase (SPT) in response to ceramide levels. When complexed to SPT, the binding of ceramides to its N-terminus stabilizes a conformation that block SPT substrate entry, hence preventing SPT catalytic activity. Through this mechanism, maintains ceramide levels at sufficient concentrations for the production of complex sphingolipids, but which prevents the accumulation of ceramides to levels that trigger apoptosis. This Bos taurus (Bovine) protein is ORM1-like protein 3 (ORMDL3).